We begin with the raw amino-acid sequence, 352 residues long: Ion-translocating oxidoreductase complex subunit D (352 aa).

4 helical membrane passes run 20–40 (IMLL…WFFG), 42–62 (GTLF…AIVL), 69–91 (VASH…SIPP), and 123–143 (PAMI…TSWL). Thr187 carries the post-translational modification FMN phosphoryl threonine. 5 helical membrane-spanning segments follow: residues 215–235 (LAGV…VFLL), 242–262 (WHIP…GWLF), 267–287 (LASP…FFIL), 301–321 (LIFG…GGYP), and 322–342 (DGVA…DYYT).

This sequence belongs to the NqrB/RnfD family. In terms of assembly, the complex is composed of six subunits: RsxA, RsxB, RsxC, RsxD, RsxE and RsxG. FMN is required as a cofactor.

The protein localises to the cell inner membrane. Functionally, part of a membrane-bound complex that couples electron transfer with translocation of ions across the membrane. Required to maintain the reduced state of SoxR. In Salmonella paratyphi A (strain ATCC 9150 / SARB42), this protein is Ion-translocating oxidoreductase complex subunit D.